The chain runs to 222 residues: Glutathione-specific gamma-glutamylcyclotransferase 1 (222 aa).

The segment at 1–25 is disordered; the sequence is MKQESAAQSTPPPSLSPAPSAQPSW. A substrate-binding site is contributed by 35–40; that stretch reads IFGYGS. Glu115 serves as the catalytic Proton acceptor.

This sequence belongs to the gamma-glutamylcyclotransferase family. ChaC subfamily. In terms of assembly, interacts with NOTCH1 (via extracellular region).

It is found in the cytoplasm. The protein localises to the cytosol. The protein resides in the golgi apparatus. Its subcellular location is the trans-Golgi network. It catalyses the reaction glutathione = L-cysteinylglycine + 5-oxo-L-proline. Its function is as follows. Catalyzes the cleavage of glutathione into 5-oxo-L-proline and a Cys-Gly dipeptide. Acts specifically on glutathione, but not on other gamma-glutamyl peptides. Glutathione depletion is an important factor for apoptosis initiation and execution. Acts as a pro-apoptotic component of the unfolded protein response pathway by mediating the pro-apoptotic effects of the ATF4-ATF3-DDIT3/CHOP cascade. Negative regulator of Notch signaling pathway involved in embryonic neurogenesis: acts by inhibiting Notch cleavage by furin, maintaining Notch in an immature inactive form, thereby promoting neurogenesis in embryos. The sequence is that of Glutathione-specific gamma-glutamylcyclotransferase 1 from Rattus norvegicus (Rat).